Reading from the N-terminus, the 1792-residue chain is Protein TIC 214 (1792 aa).

Transmembrane regions (helical) follow at residues 18-38 (IINSIVVVGLYYGFLTTFSIG), 64-84 (FITGQLIMFISIYYAPLHLAL), 87-107 (PHIITVIALPYLLFQFFGNNH), 129-149 (IFFHNLIFQLLNPFFLPSSIL), 165-185 (IFLISSFIGWIIGHTFFMKWI), and 221-241 (IFLVFLFITCLYYLGRVPPPF).

The protein belongs to the TIC214 family. Part of the Tic complex.

Its subcellular location is the plastid. It localises to the chloroplast inner membrane. Involved in protein precursor import into chloroplasts. May be part of an intermediate translocation complex acting as a protein-conducting channel at the inner envelope. In Glycine max (Soybean), this protein is Protein TIC 214.